The chain runs to 296 residues: Uricase (296 aa).

Active-site charge relay system residues include Lys-14 and Thr-61. 7 residues coordinate urate: Thr-61, Asp-62, Phe-163, Arg-180, Val-229, Gln-230, and Asn-256. The active-site Charge relay system is the His-258.

It belongs to the uricase family.

It localises to the peroxisome. The protein resides in the cytoplasm. The protein localises to the nucleus. The enzyme catalyses urate + O2 + H2O = 5-hydroxyisourate + H2O2. The protein operates within purine metabolism; urate degradation; (S)-allantoin from urate: step 1/3. In terms of biological role, catalyzes the oxidation of uric acid to 5-hydroxyisourate, which is further processed to form (S)-allantoin. In Schizosaccharomyces pombe (strain 972 / ATCC 24843) (Fission yeast), this protein is Uricase.